Reading from the N-terminus, the 87-residue chain is Small ribosomal subunit protein bS20 (87 aa).

The segment at 1 to 26 (MANIKSAKKRAVQSEKARKHNASRRS) is disordered.

Belongs to the bacterial ribosomal protein bS20 family.

Its function is as follows. Binds directly to 16S ribosomal RNA. In Enterobacter sp. (strain 638), this protein is Small ribosomal subunit protein bS20.